Consider the following 225-residue polypeptide: Membrane protein (225 aa).

The Virion surface segment spans residues 1–20 (MSNETNCTLDFEQSVELFKE). Residues 21-41 (YNLFITAFLLFLTIILQYGYA) traverse the membrane as a helical segment. The Intravirion portion of the chain corresponds to 42–51 (TRSKFIYILK). Residues 52–72 (MIVLWCFWPLNIAVGVISCIY) form a helical membrane-spanning segment. The Virion surface segment spans residues 73–77 (PPNTG). Residues 78 to 98 (GLVAAIILTVFACLSFVGYWI) form a helical membrane-spanning segment. Topologically, residues 99–225 (QSIRLFKRCR…VATGGSSLYT (127 aa)) are intravirion.

Belongs to the gammacoronaviruses M protein family. As to quaternary structure, homomultimer. Interacts with envelope E protein in the budding compartment of the host cell, which is located between endoplasmic reticulum and the Golgi complex. Forms a complex with HE and S proteins. Interacts with nucleocapsid N protein. This interaction probably participates in RNA packaging into the virus.

Its subcellular location is the virion membrane. It is found in the host Golgi apparatus membrane. Functionally, component of the viral envelope that plays a central role in virus morphogenesis and assembly via its interactions with other viral proteins. The sequence is that of Membrane protein from Gallus gallus (Chicken).